The following is a 357-amino-acid chain: BLOC-1-related complex subunit 6 (357 aa).

The disordered stretch occupies residues 20 to 196 (HQALVFGGGP…SGAGGGRRAT (177 aa)). A compositionally biased stretch (low complexity) spans 90-99 (GAGSRRGAPG). Residues 138 to 149 (EQQEEEDNDEEA) show a composition bias toward acidic residues. Over residues 150–162 (AAGSRAGRSFSSR) the composition is skewed to low complexity. Ser168 carries the phosphoserine modification. Thr196 bears the Phosphothreonine mark. The residue at position 199 (Ser199) is a Phosphoserine. Residues 227-256 (LSGAPPPPPSAPARPCPAPAPTPTPAIPPI) form a disordered region. Positions 230 to 256 (APPPPPSAPARPCPAPAPTPTPAIPPI) are enriched in pro residues.

Belongs to the BORCS6 family. Component of the BLOC-one-related complex (BORC) which is composed of BLOC1S1, BLOC1S2, BORCS5, BORCS6, BORCS7, BORCS8, KXD1 and SNAPIN.

It localises to the lysosome membrane. Its function is as follows. As part of the BORC complex may play a role in lysosomes movement and localization at the cell periphery. Associated with the cytosolic face of lysosomes, the BORC complex may recruit ARL8B and couple lysosomes to microtubule plus-end-directed kinesin motor. The chain is BLOC-1-related complex subunit 6 from Homo sapiens (Human).